A 229-amino-acid chain; its full sequence is MSLLAQLDQKIAANGGLIVSCQPVPDSPLDKPEIVAAMALAAEQAGAVAIRIEGVANLQATRAVVSVPIIGIVKRDLEDSPVRITAYIEDVDALAQAGADIIAIDGTDRPRPVPVETLLARIHHHGLLAMTDCSTPEDGLACQKLGAEIIGTTLSGYTTPETPEEPDLALVKTLSEAGCRVIAEGRYNTPAQAADAMRHGAWAVTVGSAITRLEHICQWYNTAMKKAVL.

It belongs to the NanE family.

It catalyses the reaction an N-acyl-D-glucosamine 6-phosphate = an N-acyl-D-mannosamine 6-phosphate. Its pathway is amino-sugar metabolism; N-acetylneuraminate degradation; D-fructose 6-phosphate from N-acetylneuraminate: step 3/5. Functionally, converts N-acetylmannosamine-6-phosphate (ManNAc-6-P) to N-acetylglucosamine-6-phosphate (GlcNAc-6-P). The chain is Putative N-acetylmannosamine-6-phosphate 2-epimerase from Shigella flexneri serotype 5b (strain 8401).